The primary structure comprises 634 residues: Threonine--tRNA ligase (634 aa).

The TGS domain maps to 1 to 61 (MFEVKLKDGS…DSDCEVQFVK (61 aa)). The catalytic stretch occupies residues 242-532 (DHRKIGKEMG…LIEHYAGKFP (291 aa)). Residues C333, H384, and H509 each contribute to the Zn(2+) site.

Belongs to the class-II aminoacyl-tRNA synthetase family. As to quaternary structure, homodimer. Zn(2+) serves as cofactor.

It is found in the cytoplasm. The catalysed reaction is tRNA(Thr) + L-threonine + ATP = L-threonyl-tRNA(Thr) + AMP + diphosphate + H(+). Catalyzes the attachment of threonine to tRNA(Thr) in a two-step reaction: L-threonine is first activated by ATP to form Thr-AMP and then transferred to the acceptor end of tRNA(Thr). Also edits incorrectly charged L-seryl-tRNA(Thr). This is Threonine--tRNA ligase from Finegoldia magna (strain ATCC 29328 / DSM 20472 / WAL 2508) (Peptostreptococcus magnus).